The chain runs to 85 residues: Coiled-coil-helix-coiled-coil-helix domain-containing protein 7 (85 aa).

The 43-residue stretch at 13-55 (INPCLSESDASTRCLDENNYDRERCSTYFLRYKNCRRFWNSIV) folds into the CHCH domain. Short sequence motifs (cx9C motif) lie at residues 16 to 26 (CLSESDASTRC) and 37 to 47 (CSTYFLRYKNC). Disulfide bonds link C16–C47 and C26–C37.

It belongs to the CHCHD7 family. Monomer.

It localises to the mitochondrion intermembrane space. The polypeptide is Coiled-coil-helix-coiled-coil-helix domain-containing protein 7 (CHCHD7) (Homo sapiens (Human)).